Here is a 364-residue protein sequence, read N- to C-terminus: Dihydroorotate dehydrogenase (quinone) (364 aa).

Residues alanine 62–lysine 66 and threonine 86 contribute to the FMN site. Lysine 66 is a binding site for substrate. Asparagine 111 to phenylalanine 115 is a substrate binding site. FMN contacts are provided by asparagine 142 and asparagine 175. Residue asparagine 175 coordinates substrate. Serine 178 (nucleophile) is an active-site residue. Residue asparagine 180 participates in substrate binding. FMN is bound by residues lysine 216 and threonine 244. Asparagine 245–threonine 246 lines the substrate pocket. FMN-binding positions include glycine 267, glycine 296, and tyrosine 317–threonine 318.

It belongs to the dihydroorotate dehydrogenase family. Type 2 subfamily. Monomer. Requires FMN as cofactor.

It is found in the cell membrane. It carries out the reaction (S)-dihydroorotate + a quinone = orotate + a quinol. The protein operates within pyrimidine metabolism; UMP biosynthesis via de novo pathway; orotate from (S)-dihydroorotate (quinone route): step 1/1. In terms of biological role, catalyzes the conversion of dihydroorotate to orotate with quinone as electron acceptor. In Anaeromyxobacter dehalogenans (strain 2CP-C), this protein is Dihydroorotate dehydrogenase (quinone).